The sequence spans 468 residues: Glutathione reductase (468 aa).

Residues Ser-17 and Gly-18 each contribute to the FAD site. Position 17 (Ser-17) interacts with glutathione. Arg-24 is a glutathione binding site. 4 residues coordinate FAD: Glu-38, Thr-45, Cys-46, and Lys-54. The cysteines at positions 46 and 51 are disulfide-linked. Tyr-103 contributes to the glutathione binding site. Ala-119 lines the FAD pocket. Residues Ala-185, Ile-188, Glu-191, Arg-208, Arg-214, and Gly-276 each contribute to the NADP(+) site. Asp-317 is a binding site for FAD. NADP(+) is bound at residue Glu-323. Residue Thr-325 coordinates FAD. Residue Arg-333 coordinates glutathione. Residue Val-358 coordinates NADP(+). Lys-410 lines the glutathione pocket. His-457 serves as a coordination point for FAD. The Proton acceptor role is filled by His-457.

Belongs to the class-I pyridine nucleotide-disulfide oxidoreductase family. In terms of assembly, homodimer. It depends on FAD as a cofactor.

The protein localises to the cytoplasm. The protein resides in the mitochondrion. The enzyme catalyses 2 glutathione + NADP(+) = glutathione disulfide + NADPH + H(+). Catalyzes the reduction of glutathione disulfide (GSSG) to reduced glutathione (GSH). Constitutes the major mechanism to maintain a high GSH:GSSG ratio in the cytosol. This Neurospora crassa (strain ATCC 24698 / 74-OR23-1A / CBS 708.71 / DSM 1257 / FGSC 987) protein is Glutathione reductase (gtr-1).